The following is a 337-amino-acid chain: Cysteinyl leukotriene receptor 1 (337 aa).

The Extracellular portion of the chain corresponds to 1–28; sequence MDETGNLTVSSATCHDTIDDFRNQVYST. Residue asparagine 6 is glycosylated (N-linked (GlcNAc...) asparagine). Residues 29-49 traverse the membrane as a helical segment; the sequence is LYSMISVVGFFGNGFVLYVLI. The Cytoplasmic portion of the chain corresponds to 50 to 57; the sequence is KTYHKKSA. Residues 58-78 form a helical membrane-spanning segment; the sequence is FQVYMINLAVADLLCVCTLPL. Over 79-106 the chain is Extracellular; the sequence is RVVYYVHKGIWLFGDFLCRLSTYALYVN. Cysteine 96 and cysteine 173 are joined by a disulfide. The chain crosses the membrane as a helical span at residues 107 to 127; the sequence is LYCSIFFMTAMSFFRCIAIVF. Residues 128–141 lie on the Cytoplasmic side of the membrane; the sequence is PVQNINLVTQKKAR. Residues 142-162 traverse the membrane as a helical segment; that stretch reads FVCVGIWIFVILTSSPFLMAK. The Extracellular segment spans residues 163-193; the sequence is PQKDEKNNTKCFEPPQDNQTKNHVLVLHYVS. Asparagine 169 and asparagine 180 each carry an N-linked (GlcNAc...) asparagine glycan. A helical membrane pass occupies residues 194-214; that stretch reads LFVGFIIPFVIIIVCYTMIIL. Residues 215-230 lie on the Cytoplasmic side of the membrane; it reads TLLKKSMKKNLSSHKK. A helical transmembrane segment spans residues 231-251; that stretch reads AIGMIMVVTAAFLVSFMPYHI. Residues 252-276 lie on the Extracellular side of the membrane; it reads QRTIHLHFLHNETKPCDSVLRMQKS. An N-linked (GlcNAc...) asparagine glycan is attached at asparagine 262. A helical transmembrane segment spans residues 277–297; the sequence is VVITLSLAASNCCFDPLLYFF. At 298-337 the chain is on the cytoplasmic side; that stretch reads SGGNFRKRLSTFRKHSLSSVTYVPRKKASLPEKGEEICKV.

This sequence belongs to the G-protein coupled receptor 1 family. As to expression, widely expressed, with highest levels in spleen and peripheral blood leukocytes. Lower expression in several tissues, such as lung (mostly in smooth muscle bundles and alveolar macrophages), placenta, small intestine, pancreas, colon and heart.

Its subcellular location is the cell membrane. Functionally, receptor for cysteinyl leukotrienes mediating bronchoconstriction of individuals with and without asthma. Stimulation by LTD4 results in the contraction and proliferation of smooth muscle, edema, eosinophil migration and damage to the mucus layer in the lung. This response is mediated via a G-protein that activates a phosphatidylinositol-calcium second messenger system. The rank order of affinities for the leukotrienes is LTD4 &gt;&gt; LTE4 = LTC4 &gt;&gt; LTB4. In Homo sapiens (Human), this protein is Cysteinyl leukotriene receptor 1 (CYSLTR1).